A 384-amino-acid polypeptide reads, in one-letter code: Alanine racemase (384 aa).

Catalysis depends on Lys-39, which acts as the Proton acceptor; specific for D-alanine. N6-(pyridoxal phosphate)lysine is present on Lys-39. Arg-136 contributes to the substrate binding site. The active-site Proton acceptor; specific for L-alanine is the Tyr-265. Met-312 is a substrate binding site.

Belongs to the alanine racemase family. The cofactor is pyridoxal 5'-phosphate.

It carries out the reaction L-alanine = D-alanine. It functions in the pathway amino-acid biosynthesis; D-alanine biosynthesis; D-alanine from L-alanine: step 1/1. Functionally, catalyzes the interconversion of L-alanine and D-alanine. May also act on other amino acids. The chain is Alanine racemase (alr) from Geobacillus kaustophilus (strain HTA426).